The primary structure comprises 550 residues: Hydroxylamine reductase (550 aa).

Residues C3, C6, C18, and C25 each contribute to the [2Fe-2S] cluster site. Hybrid [4Fe-2O-2S] cluster contacts are provided by H249, E273, C317, C405, C433, C458, E492, and K494. C405 is modified (cysteine persulfide).

The protein belongs to the HCP family. [2Fe-2S] cluster serves as cofactor. The cofactor is hybrid [4Fe-2O-2S] cluster.

It is found in the cytoplasm. The enzyme catalyses A + NH4(+) + H2O = hydroxylamine + AH2 + H(+). Functionally, catalyzes the reduction of hydroxylamine to form NH(3) and H(2)O. This Shigella flexneri serotype 5b (strain 8401) protein is Hydroxylamine reductase.